Here is a 375-residue protein sequence, read N- to C-terminus: Probable trehalose-phosphate phosphatase 7 (375 aa).

It belongs to the trehalose phosphatase family. Requires a divalent metal cation as cofactor.

The enzyme catalyses alpha,alpha-trehalose 6-phosphate + H2O = alpha,alpha-trehalose + phosphate. It functions in the pathway glycan biosynthesis; trehalose biosynthesis. Removes the phosphate from trehalose 6-phosphate to produce free trehalose. Trehalose accumulation in plant may improve abiotic stress tolerance. In Oryza sativa subsp. japonica (Rice), this protein is Probable trehalose-phosphate phosphatase 7 (TPP7).